The sequence spans 48 residues: ATP synthase protein 8 (48 aa).

A helical membrane pass occupies residues 4–24 (LVPFYFINILSFGFLIFTVLL).

It belongs to the ATPase protein 8 family. As to quaternary structure, F-type ATPases have 2 components, CF(1) - the catalytic core - and CF(0) - the membrane proton channel.

The protein resides in the mitochondrion membrane. In terms of biological role, mitochondrial membrane ATP synthase (F(1)F(0) ATP synthase or Complex V) produces ATP from ADP in the presence of a proton gradient across the membrane which is generated by electron transport complexes of the respiratory chain. F-type ATPases consist of two structural domains, F(1) - containing the extramembraneous catalytic core and F(0) - containing the membrane proton channel, linked together by a central stalk and a peripheral stalk. During catalysis, ATP synthesis in the catalytic domain of F(1) is coupled via a rotary mechanism of the central stalk subunits to proton translocation. Part of the complex F(0) domain. Minor subunit located with subunit a in the membrane. This chain is ATP synthase protein 8 (atp8), found in Schizosaccharomyces pombe (strain 972 / ATCC 24843) (Fission yeast).